The sequence spans 415 residues: MIDLKLLQKDFQTISNKLSRKGVDADLLENLKIRNEELKVAKVAYETLQAAQNSMSKDFGIYKKEGRDTTELKAKVDENKIKIAEALDTQRIKQEALEYLAMSIPNIPDDDVPDGKDENDNVEIKKVLTPKEFSFTPKEHWELAGQNGWIDFERGVKLATSRFSVSFGMGAKLERALINFMLNFNSKRGFEEVSVPSLVNRAALEGTGQLPKFEDDLYKIQGQELFLIPTAEVPVTNLYQDEILHVERLPIKMTAYTSCFRKEAGAAGRDTRGMIRQHQFHKVELVSITKPQQSDEIFDEMVQTASDLLSALELPHRLVRLCGGDLGFGAAKTVDLEVWLPGQNAYREISSVSNTREFQARRAKIRFKDGDKNSFVHTLNGSSLAVGRTLVAIMENFQNEDGSITIPKVLSPYLN.

An L-serine-binding site is contributed by 230-232 (TAE). 261–263 (RKE) serves as a coordination point for ATP. E284 is a binding site for L-serine. 348-351 (EISS) contributes to the ATP binding site. S382 provides a ligand contact to L-serine.

Belongs to the class-II aminoacyl-tRNA synthetase family. Type-1 seryl-tRNA synthetase subfamily. As to quaternary structure, homodimer. The tRNA molecule binds across the dimer.

It is found in the cytoplasm. The enzyme catalyses tRNA(Ser) + L-serine + ATP = L-seryl-tRNA(Ser) + AMP + diphosphate + H(+). The catalysed reaction is tRNA(Sec) + L-serine + ATP = L-seryl-tRNA(Sec) + AMP + diphosphate + H(+). The protein operates within aminoacyl-tRNA biosynthesis; selenocysteinyl-tRNA(Sec) biosynthesis; L-seryl-tRNA(Sec) from L-serine and tRNA(Sec): step 1/1. Functionally, catalyzes the attachment of serine to tRNA(Ser). Is also able to aminoacylate tRNA(Sec) with serine, to form the misacylated tRNA L-seryl-tRNA(Sec), which will be further converted into selenocysteinyl-tRNA(Sec). In Sulfurimonas denitrificans (strain ATCC 33889 / DSM 1251) (Thiomicrospira denitrificans (strain ATCC 33889 / DSM 1251)), this protein is Serine--tRNA ligase.